Here is a 182-residue protein sequence, read N- to C-terminus: Coiled-coil domain-containing protein 32 (182 aa).

Over residues 1–10 the composition is skewed to basic and acidic residues; that stretch reads MMIDDFETHA. Disordered regions lie at residues 1–61 and 153–182; these read MMID…FSPW and PTQN…SPEK. The segment covering 153–167 has biased composition (polar residues); sequence PTQNSETPASSSQTD. Residues 172–182 are compositionally biased toward acidic residues; it reads EEEEECPSPEK.

Associates with adaptor protein complex 2 (AP-2).

It localises to the membrane. The protein localises to the coated pit. Functionally, regulates clathrin-mediated endocytsois of cargos such as transferrin probably through the association and modulation of adaptor protein complex 2 (AP-2). Has a role in ciliogenesis and is required for proper cephalic and left/right axis development. The sequence is that of Coiled-coil domain-containing protein 32 from Danio rerio (Zebrafish).